A 360-amino-acid chain; its full sequence is GTPase Obg (360 aa).

The Obg domain maps to 1-156 (MFVDSVEIII…KCVRLELKLI (156 aa)). One can recognise an OBG-type G domain in the interval 157–360 (ADIGLVGFPN…LKFVLLEALP (204 aa)). GTP-binding positions include 163–170 (GFPNAGKS), 188–192 (FTTLV), 210–213 (DIPG), 279–282 (NKCD), and 341–343 (SAL). 2 residues coordinate Mg(2+): serine 170 and threonine 190.

Belongs to the TRAFAC class OBG-HflX-like GTPase superfamily. OBG GTPase family. In terms of assembly, monomer. Mg(2+) is required as a cofactor.

Its subcellular location is the cytoplasm. Its function is as follows. An essential GTPase which binds GTP, GDP and possibly (p)ppGpp with moderate affinity, with high nucleotide exchange rates and a fairly low GTP hydrolysis rate. Plays a role in control of the cell cycle, stress response, ribosome biogenesis and in those bacteria that undergo differentiation, in morphogenesis control. The polypeptide is GTPase Obg (Helicobacter pylori (strain Shi470)).